Reading from the N-terminus, the 156-residue chain is MTHRRLLWALCVAALLGVVAAQAGDQQQMQPNEADALRKKWSAVEVVRDLGHIKKDLAKMIELEGAGALSQDELYFYYFRMHDFDNNNKLDGQEMMAAMFHTNHHEEDDEHDGKVPLIIPEQDIASYVDSVLRADKNQDGFISYPELRTSDLTNQI.

The N-terminal stretch at 1 to 21 (MTHRRLLWALCVAALLGVVAA) is a signal peptide. EF-hand domains are found at residues 70-105 (SQDE…TNHH) and 123-156 (DIAS…TNQI). Positions 83, 85, 87, 89, 94, 135, 137, 139, 141, and 146 each coordinate Ca(2+).

As to quaternary structure, interacts with host fibrin. Interacts with human RAGE/AGER. As to expression, saliva (at protein level). Salivary gland (at protein level). Not detected in midgut, ovary, trachea, Malpighian tubule system, synganglion and cuticle.

It is found in the secreted. The protein resides in the cytoplasm. Resistant to inhibition by host SERPINE1. Inhibited by PMSF, aprotinin, antipain and leupeptin. Inhibited by Zn(2+). In terms of biological role, anticoagulant and fibrinolytic protease that modulates blood feeding of ticks on vertebrate hosts. Degrades host fibrinogen and delays fibrin clot formation. Promotes lysis of fibrin clots in the host by activating host plasminogen in the presence of soluble fibrin. Binds Ca(2+). Hydrolyzes serine protease-specific substrates. Required for the formation of a blood pool, an accumulation of blood and tissue fluid developed at the tick's feeding site. Blocks activation of host AGER/RAGE. Reduces AGER/RAGE-dependent production of reactive oxygen species (ROS) in human endothelial cells. Prevents AGER/RAGE-dependent activation of NF-kappa-B and suppresses expression of adhesion molecules, such as VCAM1, ICAM1 and SELE, and secretion of cytokines, such as CSF3/GCSF and TGF-beta, in human endothelial cells. Suppresses RAGE/AGER-mediated migration of mouse peritoneal resident cells. Reduces AGER/RAGE-mediated inflammation in mice tissues. This is Longistatin from Haemaphysalis longicornis (Bush tick).